We begin with the raw amino-acid sequence, 124 residues long: Small ribosomal subunit protein eS6 (124 aa).

It belongs to the eukaryotic ribosomal protein eS6 family.

The protein is Small ribosomal subunit protein eS6 of Methanococcus maripaludis (strain DSM 14266 / JCM 13030 / NBRC 101832 / S2 / LL).